A 249-amino-acid chain; its full sequence is 1-(5-phosphoribosyl)-5-[(5-phosphoribosylamino)methylideneamino] imidazole-4-carboxamide isomerase (249 aa).

The Proton acceptor role is filled by Asp-8. Asp-131 (proton donor) is an active-site residue.

The protein belongs to the HisA/HisF family.

It localises to the cytoplasm. It carries out the reaction 1-(5-phospho-beta-D-ribosyl)-5-[(5-phospho-beta-D-ribosylamino)methylideneamino]imidazole-4-carboxamide = 5-[(5-phospho-1-deoxy-D-ribulos-1-ylimino)methylamino]-1-(5-phospho-beta-D-ribosyl)imidazole-4-carboxamide. Its pathway is amino-acid biosynthesis; L-histidine biosynthesis; L-histidine from 5-phospho-alpha-D-ribose 1-diphosphate: step 4/9. This Nitrosomonas europaea (strain ATCC 19718 / CIP 103999 / KCTC 2705 / NBRC 14298) protein is 1-(5-phosphoribosyl)-5-[(5-phosphoribosylamino)methylideneamino] imidazole-4-carboxamide isomerase.